Consider the following 154-residue polypeptide: Interleukin-2 (154 aa).

Positions 1 to 20 (MCKMQLLSCIALSLVLVANS) are cleaved as a signal peptide. A glycan (O-linked (GalNAc...) threonine) is linked at Thr-23. Cys-78 and Cys-126 are joined by a disulfide.

Belongs to the IL-2 family.

Its subcellular location is the secreted. Functionally, cytokine produced by activated CD4-positive helper T-cells and to a lesser extend activated CD8-positive T-cells and natural killer (NK) cells that plays pivotal roles in the immune response and tolerance. Binds to a receptor complex composed of either the high-affinity trimeric IL-2R (IL2RA/CD25, IL2RB/CD122 and IL2RG/CD132) or the low-affinity dimeric IL-2R (IL2RB and IL2RG). Interaction with the receptor leads to oligomerization and conformation changes in the IL-2R subunits resulting in downstream signaling starting with phosphorylation of JAK1 and JAK3. In turn, JAK1 and JAK3 phosphorylate the receptor to form a docking site leading to the phosphorylation of several substrates including STAT5. This process leads to activation of several pathways including STAT, phosphoinositide-3-kinase/PI3K and mitogen-activated protein kinase/MAPK pathways. Functions as a T-cell growth factor and can increase NK-cell cytolytic activity as well. Promotes strong proliferation of activated B-cells and subsequently immunoglobulin production. Plays a pivotal role in regulating the adaptive immune system by controlling the survival and proliferation of regulatory T-cells, which are required for the maintenance of immune tolerance. Moreover, participates in the differentiation and homeostasis of effector T-cell subsets, including Th1, Th2, Th17 as well as memory CD8-positive T-cells. The chain is Interleukin-2 (IL2) from Mirounga angustirostris (Northern elephant seal).